The following is a 292-amino-acid chain: NAC domain-containing protein 105 (292 aa).

The 151-residue stretch at Ile-12–Lys-162 folds into the NAC domain. A DNA-binding region spans residues Ile-112–Thr-168. The segment covering Leu-237–Asn-259 has biased composition (polar residues). Residues Leu-237–Glu-269 form a disordered region. Positions Ser-260–Glu-269 are enriched in basic and acidic residues.

Belongs to the plant vascular related NAC-domain protein family. Interacts with NAC030/VND7. As to expression, detected in root protoxylem and metaxylem poles and in vessels of protoxylems, outermost metaxylems, inner metaxylems, shoots and hypocotyls. Expressed in roots, hypocotyls, cotyledons and leaves. Present in developing xylems. Present in root developing xylems. Specifically expressed in vessels but not in interfascicular fibers in stems.

It localises to the nucleus. Functionally, transcription activator that binds to the secondary wall NAC binding element (SNBE), 5'-(T/A)NN(C/T)(T/C/G)TNNNNNNNA(A/C)GN(A/C/T)(A/T)-3', in the promoter of target genes. Involved in xylem formation by promoting the expression of secondary wall-associated transcription factors and of genes involved in secondary wall biosynthesis and programmed cell death, genes driven by the secondary wall NAC binding element (SNBE). Triggers thickening of secondary walls. The polypeptide is NAC domain-containing protein 105 (Arabidopsis thaliana (Mouse-ear cress)).